The sequence spans 606 residues: Proline--tRNA ligase (606 aa).

This sequence belongs to the class-II aminoacyl-tRNA synthetase family. ProS type 1 subfamily. In terms of assembly, homodimer.

Its subcellular location is the cytoplasm. It catalyses the reaction tRNA(Pro) + L-proline + ATP = L-prolyl-tRNA(Pro) + AMP + diphosphate. Catalyzes the attachment of proline to tRNA(Pro) in a two-step reaction: proline is first activated by ATP to form Pro-AMP and then transferred to the acceptor end of tRNA(Pro). As ProRS can inadvertently accommodate and process non-cognate amino acids such as alanine and cysteine, to avoid such errors it has two additional distinct editing activities against alanine. One activity is designated as 'pretransfer' editing and involves the tRNA(Pro)-independent hydrolysis of activated Ala-AMP. The other activity is designated 'posttransfer' editing and involves deacylation of mischarged Ala-tRNA(Pro). The misacylated Cys-tRNA(Pro) is not edited by ProRS. This chain is Proline--tRNA ligase, found in Kocuria rhizophila (strain ATCC 9341 / DSM 348 / NBRC 103217 / DC2201).